The chain runs to 475 residues: Ribulose bisphosphate carboxylase large chain (475 aa).

Positions 1–2 (MS) are excised as a propeptide. Proline 3 bears the N-acetylproline mark. The substrate site is built by asparagine 123 and threonine 173. The Proton acceptor role is filled by lysine 175. Lysine 177 serves as a coordination point for substrate. Lysine 201, aspartate 203, and glutamate 204 together coordinate Mg(2+). The residue at position 201 (lysine 201) is an N6-carboxylysine. Catalysis depends on histidine 294, which acts as the Proton acceptor. Substrate-binding residues include arginine 295, histidine 327, and serine 379.

The protein belongs to the RuBisCO large chain family. Type I subfamily. In terms of assembly, heterohexadecamer of 8 large chains and 8 small chains; disulfide-linked. The disulfide link is formed within the large subunit homodimers. Mg(2+) is required as a cofactor. Post-translationally, the disulfide bond which can form in the large chain dimeric partners within the hexadecamer appears to be associated with oxidative stress and protein turnover.

It localises to the plastid. The protein localises to the chloroplast. The catalysed reaction is 2 (2R)-3-phosphoglycerate + 2 H(+) = D-ribulose 1,5-bisphosphate + CO2 + H2O. It catalyses the reaction D-ribulose 1,5-bisphosphate + O2 = 2-phosphoglycolate + (2R)-3-phosphoglycerate + 2 H(+). In terms of biological role, ruBisCO catalyzes two reactions: the carboxylation of D-ribulose 1,5-bisphosphate, the primary event in carbon dioxide fixation, as well as the oxidative fragmentation of the pentose substrate in the photorespiration process. Both reactions occur simultaneously and in competition at the same active site. This chain is Ribulose bisphosphate carboxylase large chain, found in Welwitschia mirabilis (Tree tumbo).